Reading from the N-terminus, the 186-residue chain is TATA-box-binding protein D (186 aa).

2 repeat units span residues 10-86 (IENV…VEDL) and 101-179 (VQNI…HERL).

The protein belongs to the TBP family.

General factor that plays a role in the activation of archaeal genes transcribed by RNA polymerase. Binds specifically to the TATA box promoter element which lies close to the position of transcription initiation. The polypeptide is TATA-box-binding protein D (tbpD) (Halobacterium salinarum (strain ATCC 700922 / JCM 11081 / NRC-1) (Halobacterium halobium)).